We begin with the raw amino-acid sequence, 382 residues long: Adenosine 3'-phospho 5'-phosphosulfate transporter 2 (382 aa).

The segment covering 1-10 has biased composition (polar residues); sequence MSVSNRNGNG. Positions 1–33 are disordered; that stretch reads MSVSNRNGNGSEVIYVGDRSTNRPPRNAPSPDE. Helical transmembrane passes span 56–76, 83–103, 121–141, 144–164, 170–190, 197–217, 234–254, 271–291, 299–319, and 323–343; these read LCCA…ELIF, PYGW…GYVE, VLLA…LGYL, PTQV…SILI, GPLD…FTLA, NFNP…AAIG, VVIY…LLTG, FGYA…VLTL, LAAT…FVFF, and FTIN…LNVY.

The protein belongs to the nucleotide-sugar transporter family. SLC35B subfamily.

The protein localises to the golgi apparatus membrane. Mediates the transport of adenosine 3'-phospho 5'-phosphosulfate (PAPS), from cytosol into Golgi. PAPS is a universal sulfuryl donor for sulfation events that take place in the Golgi. Essential for viability. Involved in glycosaminoglycan synthesis and the subsequent signaling. May be involved in hh and dpp signaling by controlling the sulfation of heparan sulfate (HS). The protein is Adenosine 3'-phospho 5'-phosphosulfate transporter 2 of Aedes aegypti (Yellowfever mosquito).